The following is a 115-amino-acid chain: Alpha-endosulfine (115 aa).

Over residues 1–10 the composition is skewed to polar residues; that stretch reads MSSENLSDTQ. A disordered region spans residues 1–27; that stretch reads MSSENLSDTQMEYEDEKQDSQEKNANL. Ser65 is modified (phosphoserine; by GWL). The tract at residues 77–115 is disordered; the sequence is NKQLPVAGPDKNLVTGDHIPTPQDLPQRRSSLVTSKLAG. A compositionally biased stretch (polar residues) spans 104 to 115; sequence RRSSLVTSKLAG.

It belongs to the endosulfine family. Post-translationally, phosphorylation at Ser-65 by gwl during mitosis is essential for interaction with ppp2r2d (PR55-delta) and subsequent inactivation of PP2A.

The protein localises to the cytoplasm. Protein phosphatase inhibitor that specifically inhibits protein phosphatase 2A (PP2A) during mitosis. When phosphorylated at Ser-67 during mitosis, specifically interacts with ppp2r2d (PR55-delta) and inhibits its activity, leading to inactivation of PP2A, an essential condition to keep cyclin-B1-CDK1 activity high during M phase. The polypeptide is Alpha-endosulfine (ensa) (Salmo salar (Atlantic salmon)).